The following is a 413-amino-acid chain: 3-hydroxy-3-methylglutaryl-coenzyme A reductase (413 aa).

Catalysis depends on charge relay system residues glutamate 106 and aspartate 312. The Proton donor role is filled by histidine 408.

It belongs to the HMG-CoA reductase family.

The enzyme catalyses (R)-mevalonate + 2 NADP(+) + CoA = (3S)-3-hydroxy-3-methylglutaryl-CoA + 2 NADPH + 2 H(+). It participates in metabolic intermediate biosynthesis; (R)-mevalonate biosynthesis; (R)-mevalonate from acetyl-CoA: step 3/3. Converts HMG-CoA to mevalonate. This chain is 3-hydroxy-3-methylglutaryl-coenzyme A reductase (hmgA), found in Pyrococcus horikoshii (strain ATCC 700860 / DSM 12428 / JCM 9974 / NBRC 100139 / OT-3).